We begin with the raw amino-acid sequence, 491 residues long: Anhydromuropeptide permease (491 aa).

At 1 to 11 the chain is on the cytoplasmic side; sequence MSSQYLRIFQQ. A helical membrane pass occupies residues 12–32; the sequence is PRSAILLILGFASGLPLALTS. Residues 33 to 47 are Periplasmic-facing; the sequence is GTLQAWMTVENIDLK. The helical transmembrane segment at 48–61 threads the bilayer; it reads TIGFFSLVGQAYVF. Residues 62–81 lie on the Cytoplasmic side of the membrane; it reads KFLWSPLMDRYTPPFFGRRR. Residues 82–105 form a helical membrane-spanning segment; that stretch reads GWLLATQILLLVAIAAMGFLEPGT. Glutamine 106 is a topological domain (periplasmic). Residues 107-124 traverse the membrane as a helical segment; the sequence is LRWMAALAVVIAFCSASQ. Topologically, residues 125 to 221 are cytoplasmic; that stretch reads DIVFDAWKTD…VAPLRDFFGR (97 aa). The chain crosses the membrane as a helical span at residues 222–240; the sequence is NNAWLILLLIVLYKLGDAF. Residues 241-264 lie on the Periplasmic side of the membrane; it reads AMSLTTTFLIRGVGFDAGEVGVVN. The chain crosses the membrane as a helical span at residues 265–284; the sequence is KTLGLLATIVGALYGGILMQ. Over 285-287 the chain is Cytoplasmic; that stretch reads RLS. Residues 288–303 form a helical membrane-spanning segment; it reads LFRALLIFGILQGASN. Residues 304 to 327 lie on the Periplasmic side of the membrane; the sequence is AGYWLLSITDKHLYSMGAAVFFEN. A helical transmembrane segment spans residues 328–346; that stretch reads LCGGMGTSAFVALLMTLCN. At 347 to 421 the chain is on the cytoplasmic side; sequence KSFSATQFAL…NDNFISRTAY (75 aa). A helical membrane pass occupies residues 422-453; it reads PAGYAFAMWTLAAGVSLLAVWLLLLTMDALDL. The Periplasmic segment spans residues 454-457; the sequence is THFS. A helical transmembrane segment spans residues 458-485; it reads FLPALLEVGVLVALSGVVLGGLLDYLAL. Over 486-491 the chain is Cytoplasmic; the sequence is RKTHLT.

The protein belongs to the major facilitator superfamily.

Its subcellular location is the cell inner membrane. Functionally, permease involved in cell wall peptidoglycan recycling. Transports, from the periplasm into the cytoplasm, the disaccharide N-acetylglucosaminyl-beta-1,4-anhydro-N-acetylmuramic acid (GlcNAc-anhMurNAc) and GlcNAc-anhMurNAc-peptides. Transport is dependent on the proton motive force. The polypeptide is Anhydromuropeptide permease (ampG) (Escherichia coli O157:H7).